A 770-amino-acid chain; its full sequence is Endothelin-converting enzyme 1 (770 aa).

Topologically, residues 1 to 68 (MRGVWPPPVS…WAARTQVEKR (68 aa)) are cytoplasmic. Thr-25 is subject to Phosphothreonine. Residues 69-89 (LVVLVVLLAAGLVACLAALGI) form a helical; Signal-anchor for type II membrane protein membrane-spanning segment. Residues 90-770 (QYQTRSPSVC…MNPPHKCEVW (681 aa)) are Extracellular-facing. A Peptidase M13 domain is found at 98 to 770 (VCLSEACVSV…MNPPHKCEVW (673 aa)). 5 cysteine pairs are disulfide-bonded: Cys-99/Cys-104, Cys-122/Cys-755, Cys-130/Cys-715, Cys-185/Cys-435, and Cys-644/Cys-767. N-linked (GlcNAc...) asparagine glycans are attached at residues Asn-166, Asn-187, Asn-210, Asn-270, Asn-316, Asn-362, Asn-383, and Asn-539. His-607 serves as a coordination point for Zn(2+). Glu-608 is an active-site residue. A Zn(2+)-binding site is contributed by His-611. Asn-632 and Asn-651 each carry an N-linked (GlcNAc...) asparagine glycan. Glu-667 serves as a coordination point for Zn(2+). Asp-671 functions as the Proton donor in the catalytic mechanism.

This sequence belongs to the peptidase M13 family. In terms of assembly, homodimer; disulfide-linked. Interacts with PPP1R16B. Interacts with TSPAN8; this interaction recruits the endothelin converting enzyme ECE1 to tetraspanin-enriched microdomains and positively modulates its enzymatic activity. Zn(2+) serves as cofactor. In terms of tissue distribution, all isoforms are expressed in umbilical vein endothelial cells, polynuclear neutrophils, fibroblasts, atrium cardiomyocytes and ventricles. Isoforms A, B and C are also expressed in placenta, lung, heart, adrenal gland and phaeochromocytoma; isoforms A and C in liver, testis and small intestine; isoform B, C and D in endothelial cells and umbilical vein smooth muscle cells; isoforms C and D in saphenous vein cells, and isoform C in kidney.

Its subcellular location is the cell membrane. The enzyme catalyses Hydrolysis of the 21-Trp-|-Val-22 bond in big endothelin to form endothelin 1.. Its activity is regulated as follows. Inhibited by phosphoramidon. Activated by K49-P1-20, a twenty-residue synthetic peptide shortened from the snake B.asper myotoxin II. Its function is as follows. Converts big endothelin-1 to endothelin-1. The chain is Endothelin-converting enzyme 1 (ECE1) from Homo sapiens (Human).